Consider the following 271-residue polypeptide: HTH-type transcriptional repressor AllR (271 aa).

An HTH iclR-type domain is found at 21–83 (AQALERGIAI…SQLGWWHIGL (63 aa)). The segment at residues 43 to 62 (VSDISLNLDLPLSTTFRLLK) is a DNA-binding region (H-T-H motif). Positions 98–267 (VLSVAGPFMR…ARDISTALGL (170 aa)) constitute an IclR-ED domain. Residues 154–156 (SGA), D207, C217, and 234–236 (SIS) each bind glyoxylate.

Negative regulator of allantoin and glyoxylate utilization operons. Binds to the gcl promoter and to the allS-allA intergenic region. This Escherichia coli O6:H1 (strain CFT073 / ATCC 700928 / UPEC) protein is HTH-type transcriptional repressor AllR (allR).